We begin with the raw amino-acid sequence, 140 residues long: Nucleoside diphosphate kinase (140 aa).

The ATP site is built by Lys-11, Phe-59, Arg-87, Thr-93, Arg-104, and Asn-114. The Pros-phosphohistidine intermediate role is filled by His-117.

The protein belongs to the NDK family. As to quaternary structure, homotetramer. Requires Mg(2+) as cofactor.

It is found in the cytoplasm. It carries out the reaction a 2'-deoxyribonucleoside 5'-diphosphate + ATP = a 2'-deoxyribonucleoside 5'-triphosphate + ADP. The enzyme catalyses a ribonucleoside 5'-diphosphate + ATP = a ribonucleoside 5'-triphosphate + ADP. In terms of biological role, major role in the synthesis of nucleoside triphosphates other than ATP. The ATP gamma phosphate is transferred to the NDP beta phosphate via a ping-pong mechanism, using a phosphorylated active-site intermediate. The polypeptide is Nucleoside diphosphate kinase (Nitrobacter hamburgensis (strain DSM 10229 / NCIMB 13809 / X14)).